A 372-amino-acid polypeptide reads, in one-letter code: Probable inactive receptor-like protein kinase At1g65250 (372 aa).

Residues 1 to 4 (MGWL) and K38 contribute to the ATP site. Positions 1–314 (MGWLRKKKKP…QERCQMKAFL (314 aa)) constitute a Protein kinase domain. Residues Y128 and Y221 each carry the phosphotyrosine modification. Positions 348–372 (SSSLSSGQTQLDSAQDISSTVVLSN) are disordered. Residues 354–372 (GQTQLDSAQDISSTVVLSN) show a composition bias toward polar residues.

This sequence belongs to the protein kinase superfamily.

The polypeptide is Probable inactive receptor-like protein kinase At1g65250 (Arabidopsis thaliana (Mouse-ear cress)).